The following is a 175-amino-acid chain: Adenine phosphoribosyltransferase (175 aa).

This sequence belongs to the purine/pyrimidine phosphoribosyltransferase family. Homodimer.

The protein localises to the cytoplasm. It carries out the reaction AMP + diphosphate = 5-phospho-alpha-D-ribose 1-diphosphate + adenine. It participates in purine metabolism; AMP biosynthesis via salvage pathway; AMP from adenine: step 1/1. Its function is as follows. Catalyzes a salvage reaction resulting in the formation of AMP, that is energically less costly than de novo synthesis. The sequence is that of Adenine phosphoribosyltransferase from Nitrosospira multiformis (strain ATCC 25196 / NCIMB 11849 / C 71).